A 235-amino-acid polypeptide reads, in one-letter code: tRNA (guanine-N(1)-)-methyltransferase (235 aa).

Residues Gly-114 and Ile-134–Leu-139 contribute to the S-adenosyl-L-methionine site.

It belongs to the RNA methyltransferase TrmD family. In terms of assembly, homodimer.

The protein resides in the cytoplasm. It carries out the reaction guanosine(37) in tRNA + S-adenosyl-L-methionine = N(1)-methylguanosine(37) in tRNA + S-adenosyl-L-homocysteine + H(+). In terms of biological role, specifically methylates guanosine-37 in various tRNAs. The chain is tRNA (guanine-N(1)-)-methyltransferase from Ehrlichia ruminantium (strain Welgevonden).